We begin with the raw amino-acid sequence, 262 residues long: Putative 1-acyl-sn-glycerol-3-phosphate acyltransferase acl-1 (262 aa).

3 helical membrane passes run 3 to 23 (FLAILFVIAVLLLLAQLPVIG), 29 to 49 (VYFGMCLIIGGFLGGLASIPF), and 89 to 109 (IIIANHQSALDVLGMSFAWPV). The short motif at 94 to 99 (HQSALD) is the HXXXXD motif element.

Belongs to the 1-acyl-sn-glycerol-3-phosphate acyltransferase family.

It is found in the membrane. The catalysed reaction is a 1-acyl-sn-glycero-3-phosphate + an acyl-CoA = a 1,2-diacyl-sn-glycero-3-phosphate + CoA. Its pathway is phospholipid metabolism; CDP-diacylglycerol biosynthesis; CDP-diacylglycerol from sn-glycerol 3-phosphate: step 2/3. Converts lysophosphatidic acid (LPA) into phosphatidic acid by incorporating an acyl moiety at the sn-2 position of the glycerol backbone. The chain is Putative 1-acyl-sn-glycerol-3-phosphate acyltransferase acl-1 (acl-1) from Caenorhabditis elegans.